Here is a 223-residue protein sequence, read N- to C-terminus: MAGKPKLHYFNGRGRMECIRWLLAAAGVEFEEKFIEQPEDLDKLRNDGSLMFQQVPMVEIDGMKLVQTRAILNYIATKYNLYGKDMKERALIDMYSEGVEDLGEMIMHLPLCPPDQKDAKIAQIKERTTNRYFPAFEKVLKNHGQDYLVGNKLSKADIHLVELLYYVEELDPSLLANFPLLKGLKARVSSLPAVKKFLQPGSQRKPPMDEKNLEEAKRIFRIK.

Residue alanine 2 is modified to N-acetylalanine. Positions 3–83 constitute a GST N-terminal domain; the sequence is GKPKLHYFNG…YIATKYNLYG (81 aa). The residue at position 4 (lysine 4) is an N6-succinyllysine. Glutathione is bound by residues tyrosine 9, arginine 45, 54-55, and 67-68; these read QV and QT. A GST C-terminal domain is found at 85-208; the sequence is DMKERALIDM…QPGSQRKPPM (124 aa).

The protein belongs to the GST superfamily. Alpha family. In terms of assembly, homodimer. In terms of tissue distribution, expressed in corpus luteum, adrenal gland, testis, liver, lung, thyroid and kidney.

The protein localises to the cytoplasm. It carries out the reaction RX + glutathione = an S-substituted glutathione + a halide anion + H(+). Its function is as follows. Conjugation of reduced glutathione to a wide number of exogenous and endogenous hydrophobic electrophiles. This chain is Glutathione S-transferase A2 (GSTA2), found in Bos taurus (Bovine).